Consider the following 91-residue polypeptide: Large ribosomal subunit protein bL27 (91 aa).

This sequence belongs to the bacterial ribosomal protein bL27 family.

The polypeptide is Large ribosomal subunit protein bL27 (Chromobacterium violaceum (strain ATCC 12472 / DSM 30191 / JCM 1249 / CCUG 213 / NBRC 12614 / NCIMB 9131 / NCTC 9757 / MK)).